Here is a 449-residue protein sequence, read N- to C-terminus: Chromogranin-A (449 aa).

Residues M1–A18 form the signal peptide. C35 and C56 are oxidised to a cystine. Residues A87–A431 are disordered. S99 carries the phosphoserine modification. Basic and acidic residues predominate over residues V107–E140. Residue S142 is modified to Phosphoserine. An O-linked (GalNAc...) serine glycan is attached at S185. Residue Y191 is modified to Phosphotyrosine. S200 carries the phosphoserine modification. O-linked (GalNAc...) serine glycosylation occurs at S204. S215 carries the post-translational modification Phosphoserine. The segment covering E233–P242 has biased composition (basic and acidic residues). The O-linked (GalNAc...) threonine glycan is linked to T249. Basic and acidic residues predominate over residues G279 to Q297. S295 is subject to Phosphoserine. Residue G312 is modified to Glycine amide. Phosphoserine is present on residues S315, S325, and S363. Residues Q323–E351 are compositionally biased toward basic and acidic residues. At M364 the chain carries Methionine sulfoxide. S390, S394, S416, and S430 each carry phosphoserine. Residues Y406–D423 are compositionally biased toward basic and acidic residues. An O-linked (Xyl...) (chondroitin sulfate) serine glycan is attached at S416.

It belongs to the chromogranin/secretogranin protein family. Self-interacts; self-assembly is promoted in vitro by chondroitin sulfate attachment which occurs at mildly acidic pH conditions. Interacts with SCG3. Interacts with ITPR1 in the secretory granules. Post-translationally, in secretory granules, is attacked at both N- and C-terminal sides by proteolytic enzymes generating numerous peptides of various activities. Proteolytic processing can give rise to additional longer forms of catestatin peptides which display a less potent catecholamine release-inhibitory activity. O-glycosylated; contains chondroitin sulfate (CS). CS attachment is pH-dependent, being observed at mildly acidic conditions of pH 5 but not at neutral pH, and promotes self-assembly in vitro. As to expression, highest concentration of GE-25 found in adrenal medulla with lower levels present in the pituitary, the intestinal mucosa and the pancreas. Also found in the brain.

It is found in the secreted. The protein resides in the cytoplasmic vesicle. Its subcellular location is the secretory vesicle. It localises to the neuronal dense core vesicle. Strongly inhibits glucose induced insulin release from the pancreas. Its function is as follows. Completely inhibits catecholamine release from chromaffin cells. Functionally, has antibacterial activity against M.luteus. Not active against E.coli. In terms of biological role, inhibits catecholamine release from chromaffin cells and noradrenergic neurons by acting as a non-competitive nicotinic cholinergic antagonist. Displays antibacterial activity against Gram-positive bacteria M.luteus and B.megaterium, and Gram-negative bacteria E.coli, and antifungal activity against a variety of filamentous fungi including A.fumigatus, N.hematococca, F.culmorum, F.oxyporum, T.mentagrophytes and several forms of Candida: C.albicans, C.tropicalis, C.glabrata and C.neoform. Can induce mast cell migration, degranulation and production of cytokines and chemokines. Has antibacterial activity against Gram-positive bacteria M.luteus, B.megaterium. Not active against Gram-positive bacteria B.cereus, B.subtilis, S.pyogenes, M.fortuitum, S.aureus and L.monocytogenes and against Gram-negative bacteria E.coli, E.cloacae, S.typhimurium, K.pneumoniae and P.aeruginosa. Possesses antifungal activity against N.crassa, A.fumigatus, A.brassicicola, N.hematococca, F.culmorum and F.oxyporum and against the yeast S.cerevisiae and C.albicans. Inactive against A.benhamiae. Its function is as follows. Has antifungal activity against N.crassa, A.fumigatus, A.brassicicola, N.hematococca, F.culmorum, F.oxyporum, A.benhamiae, C.neoformans, as well as against yeasts C.albicans, and C.tropicalis. Seems to be inactive against C.glabrata. Interacts with the fungal cell wall, crosses the plasma membrane and accumulates in fungal cells where it inhibits calcineurin activity. Functionally, regulates granule biogenesis in endocrine cells by up-regulating the transcription of protease nexin 1 (SERPINE2) via a cAMP-PKA-SP1 pathway. This leads to inhibition of granule protein degradation in the Golgi complex which in turn promotes granule formation. The polypeptide is Chromogranin-A (CHGA) (Bos taurus (Bovine)).